Consider the following 261-residue polypeptide: MRVALGIEYDGSKYFGWQRQVEVDSVQAQLERALSKVANEPISVHCAGRTDTGVHATGQVVHFDTDAIRKESAWTLGVNVSLPDDIAVRWAKVVDEDFHARFSATARRYRYMIYNYQLRPGILRSGVSHYRTHLDENKMHEAAQHFVGEHDFTSFRALHCQSKSPNRNVHEVNVTRQGMYICVDIKANAFLHHMVRNIVGSLIEIGLGHQSHEWIPELLALKDRSKAAPTAKPNGLYMVDVTYPEHFQLPKLALGPLFMLD.

The active-site Nucleophile is the D51. Y109 contacts substrate.

The protein belongs to the tRNA pseudouridine synthase TruA family. As to quaternary structure, homodimer.

It carries out the reaction uridine(38/39/40) in tRNA = pseudouridine(38/39/40) in tRNA. Its function is as follows. Formation of pseudouridine at positions 38, 39 and 40 in the anticodon stem and loop of transfer RNAs. This chain is tRNA pseudouridine synthase A, found in Shewanella woodyi (strain ATCC 51908 / MS32).